Consider the following 494-residue polypeptide: Fumarate hydratase, mitochondrial (494 aa).

A mitochondrion-targeting transit peptide spans 1–15 (MLRASATRFLSQAKN). Residues 128–130 (SGT), 159–162 (HPND), 169–171 (SSN), and Thr-217 contribute to the substrate site. Catalysis depends on His-218, which acts as the Proton donor/acceptor. The active site involves Ser-348. Substrate contacts are provided by residues Ser-349 and 354–356 (KVN).

The protein belongs to the class-II fumarase/aspartase family. Fumarase subfamily. In terms of assembly, homotetramer.

It is found in the mitochondrion matrix. The protein localises to the cytoplasm. The protein resides in the nucleus. The catalysed reaction is (S)-malate = fumarate + H2O. The protein operates within carbohydrate metabolism; tricarboxylic acid cycle; (S)-malate from fumarate: step 1/1. Its function is as follows. Catalyzes the reversible stereospecific interconversion of fumarate to L-malate. In mitochondrion, catalyzes the hydration of fumarate to L-malate in the tricarboxylic acid (TCA) cycle to facilitate a transition step in the production of energy in the form of NADH. In cytoplasm and nucleus, involved in DNA repair in response to DNA damage: following DNA double-strand breaks (DSBs), translocates from the cytosol to the nucleus and promotes DNA repair by catalyzing the dehydration of L-malate to fumarate. This Rhizopus oryzae (Mucormycosis agent) protein is Fumarate hydratase, mitochondrial.